The primary structure comprises 260 residues: Proteasome subunit alpha (260 aa).

This sequence belongs to the peptidase T1A family. In terms of assembly, the 20S proteasome core is composed of 14 alpha and 14 beta subunits that assemble into four stacked heptameric rings, resulting in a barrel-shaped structure. The two inner rings, each composed of seven catalytic beta subunits, are sandwiched by two outer rings, each composed of seven alpha subunits. The catalytic chamber with the active sites is on the inside of the barrel. Has a gated structure, the ends of the cylinder being occluded by the N-termini of the alpha-subunits. Is capped at one or both ends by the proteasome regulatory ATPase, PAN.

The protein localises to the cytoplasm. With respect to regulation, the formation of the proteasomal ATPase PAN-20S proteasome complex, via the docking of the C-termini of PAN into the intersubunit pockets in the alpha-rings, triggers opening of the gate for substrate entry. Interconversion between the open-gate and close-gate conformations leads to a dynamic regulation of the 20S proteasome proteolysis activity. Its function is as follows. Component of the proteasome core, a large protease complex with broad specificity involved in protein degradation. The protein is Proteasome subunit alpha of Thermococcus kodakarensis (strain ATCC BAA-918 / JCM 12380 / KOD1) (Pyrococcus kodakaraensis (strain KOD1)).